The following is a 358-amino-acid chain: Phosphate acyltransferase (358 aa).

This sequence belongs to the PlsX family. As to quaternary structure, homodimer. Probably interacts with PlsY.

It is found in the cytoplasm. It catalyses the reaction a fatty acyl-[ACP] + phosphate = an acyl phosphate + holo-[ACP]. Its pathway is lipid metabolism; phospholipid metabolism. In terms of biological role, catalyzes the reversible formation of acyl-phosphate (acyl-PO(4)) from acyl-[acyl-carrier-protein] (acyl-ACP). This enzyme utilizes acyl-ACP as fatty acyl donor, but not acyl-CoA. This is Phosphate acyltransferase from Escherichia fergusonii (strain ATCC 35469 / DSM 13698 / CCUG 18766 / IAM 14443 / JCM 21226 / LMG 7866 / NBRC 102419 / NCTC 12128 / CDC 0568-73).